The following is a 303-amino-acid chain: MDALELKNIISDGLLSFPVTDFDQNGDFNKSSYAKRLEWLAPYGASALFAAGGTGEFFSLTGNEYSEVIKTAVDTCKGSVPIIAGAGGPTRQAIEQAKEAERLGAHGILLMPHYLTEASQEGLIEHVKQVCNSVDFGVIFYNRSVSRLNLDSIQKLTEMCPNLIGFKDSSGQIDMMTAVTQTIGDRLSYLGGLPTAEVFAAPYKALGCPVYSSAVFNFIPKTAMEFYNALRSDDFETTNRLIKDFFLPLIKIRDRKSGYAVSMIKAGAKIVGHDAGPVRPPLSDLTQADYEDLAALIATLGPQ.

Belongs to the DapA family.

It catalyses the reaction 5-dehydro-4-deoxy-D-glucarate + H(+) = 2,5-dioxopentanoate + CO2 + H2O. It functions in the pathway carbohydrate acid metabolism; D-glucarate degradation; 2,5-dioxopentanoate from D-glucarate: step 2/2. The polypeptide is Probable 5-dehydro-4-deoxyglucarate dehydratase (Acinetobacter baumannii (strain ATCC 17978 / DSM 105126 / CIP 53.77 / LMG 1025 / NCDC KC755 / 5377)).